Consider the following 114-residue polypeptide: Protein preY, mitochondrial (114 aa).

The transit peptide at 1-35 (MLSGARCRLASALRGTRAPPSAVARRCLHASGSRP) directs the protein to the mitochondrion. The segment at 14–49 (RGTRAPPSAVARRCLHASGSRPLADRGKKTEEPPRD) is disordered. A compositionally biased stretch (basic and acidic residues) spans 36 to 49 (LADRGKKTEEPPRD). The TRM112 domain maps to 51 to 97 (DPALLEFLVCPLSKKPLRYEASTNELINEELGIAYPIIDGIPNMIPQ).

It belongs to the PREY family. As to quaternary structure, interacts (via TRM112 domain) with NDUFAF5; the interaction is direct and stabilizes NDUFAF5 protein. Interacts with COQ5; the interaction is direct, stabilizes COQ5 protein and associates PYURF with COQ enzyme complex.

It localises to the mitochondrion. Functionally, in mitochondria, S-adenosylmethionine-dependent methyltransferase chaperone that supports both coenzyme Q biosynthesis, by stabilizing its components, such as COQ5, and NADH:ubiquinone oxidoreductase complex (complex I, MT-ND1) assembly, by stabilizing complex I assembly factors, such as NDUFAF5. The sequence is that of Protein preY, mitochondrial from Homo sapiens (Human).